The chain runs to 352 residues: Chorismate synthase (352 aa).

An NADP(+)-binding site is contributed by arginine 48. FMN is bound by residues 125 to 127 (RSS), 238 to 239 (NA), glycine 278, 293 to 297 (KPTSS), and arginine 319.

The protein belongs to the chorismate synthase family. Homotetramer. The cofactor is FMNH2.

The catalysed reaction is 5-O-(1-carboxyvinyl)-3-phosphoshikimate = chorismate + phosphate. It participates in metabolic intermediate biosynthesis; chorismate biosynthesis; chorismate from D-erythrose 4-phosphate and phosphoenolpyruvate: step 7/7. Its function is as follows. Catalyzes the anti-1,4-elimination of the C-3 phosphate and the C-6 proR hydrogen from 5-enolpyruvylshikimate-3-phosphate (EPSP) to yield chorismate, which is the branch point compound that serves as the starting substrate for the three terminal pathways of aromatic amino acid biosynthesis. This reaction introduces a second double bond into the aromatic ring system. In Legionella pneumophila (strain Lens), this protein is Chorismate synthase.